A 143-amino-acid chain; its full sequence is Transcriptional regulator MraZ (143 aa).

SpoVT-AbrB domains are found at residues 5 to 47 and 76 to 119; these read TYTP…PKEE and ADEQ…DAQA.

It belongs to the MraZ family. As to quaternary structure, forms oligomers.

Its subcellular location is the cytoplasm. It localises to the nucleoid. The polypeptide is Transcriptional regulator MraZ (Corynebacterium glutamicum (strain R)).